A 190-amino-acid polypeptide reads, in one-letter code: Pyridoxal 5'-phosphate synthase subunit PdxT (190 aa).

46 to 48 provides a ligand contact to L-glutamine; it reads GES. The active-site Nucleophile is the C78. Residues R108 and 137-138 each bind L-glutamine; that span reads IR. Residues H174 and E176 each act as charge relay system in the active site.

Belongs to the glutaminase PdxT/SNO family. As to quaternary structure, in the presence of PdxS, forms a dodecamer of heterodimers. Only shows activity in the heterodimer.

It catalyses the reaction aldehydo-D-ribose 5-phosphate + D-glyceraldehyde 3-phosphate + L-glutamine = pyridoxal 5'-phosphate + L-glutamate + phosphate + 3 H2O + H(+). The catalysed reaction is L-glutamine + H2O = L-glutamate + NH4(+). Its pathway is cofactor biosynthesis; pyridoxal 5'-phosphate biosynthesis. In terms of biological role, catalyzes the hydrolysis of glutamine to glutamate and ammonia as part of the biosynthesis of pyridoxal 5'-phosphate. The resulting ammonia molecule is channeled to the active site of PdxS. The polypeptide is Pyridoxal 5'-phosphate synthase subunit PdxT (Chloroflexus aggregans (strain MD-66 / DSM 9485)).